Reading from the N-terminus, the 360-residue chain is Isocitrate dehydrogenase [NAD] subunit 1, mitochondrial (360 aa).

The N-terminal 11 residues, 1–11 (MLNRTIAKRTL), are a transit peptide targeting the mitochondrion. Residues arginine 109, arginine 140, and aspartate 228 each coordinate substrate. Residue aspartate 228 participates in Mg(2+) binding.

The protein belongs to the isocitrate and isopropylmalate dehydrogenases family. As to quaternary structure, octamer of two non-identical subunits IDH1 and IDH2. Mg(2+) is required as a cofactor. Requires Mn(2+) as cofactor.

It localises to the mitochondrion. The enzyme catalyses D-threo-isocitrate + NAD(+) = 2-oxoglutarate + CO2 + NADH. With respect to regulation, allosterically regulated by several compounds including AMP, NAD(+), and citrate. Its function is as follows. Performs an essential role in the oxidative function of the citric acid cycle. Also binds RNA; specifically to the 5'-untranslated leaders of mitochondrial mRNAs. The polypeptide is Isocitrate dehydrogenase [NAD] subunit 1, mitochondrial (IDH1) (Saccharomyces cerevisiae (strain ATCC 204508 / S288c) (Baker's yeast)).